A 104-amino-acid polypeptide reads, in one-letter code: MKDHEYHALTDAFFQYVEDTVDAGYPDIDCERAGGVLTLSFENKTKVIINKQEPLHQIWVATRENGFHFELQGESWIDNRFGHELKTLLSKACTTQAGEPVQFP.

It belongs to the frataxin family.

Functionally, involved in iron-sulfur (Fe-S) cluster assembly. May act as a regulator of Fe-S biogenesis. This is Iron-sulfur cluster assembly protein CyaY from Aeromonas hydrophila subsp. hydrophila (strain ATCC 7966 / DSM 30187 / BCRC 13018 / CCUG 14551 / JCM 1027 / KCTC 2358 / NCIMB 9240 / NCTC 8049).